The chain runs to 136 residues: Translation initiation factor 5A (136 aa).

Position 36 is a hypusine (Lys-36).

This sequence belongs to the eIF-5A family.

The protein localises to the cytoplasm. Functionally, functions by promoting the formation of the first peptide bond. The polypeptide is Translation initiation factor 5A (eIF5A) (Hyperthermus butylicus (strain DSM 5456 / JCM 9403 / PLM1-5)).